A 764-amino-acid polypeptide reads, in one-letter code: Complement factor B (764 aa).

An N-terminal signal peptide occupies residues 1–25 (MGSNLSPQLCLMPFILGLLSGGVTT). 3 consecutive Sushi domains span residues 35–100 (ESCS…ECRA), 101–160 (IHCP…ICDN), and 163–220 (GYCS…SCQD). Intrachain disulfides connect C37-C76, C62-C98, C103-C145, C131-C158, C165-C205, and C191-C218. N122 and N142 each carry an N-linked (GlcNAc...) asparagine glycan. In terms of domain architecture, VWFA spans 270–469 (NIYLVLDGSD…NLEDVFYQMI (200 aa)). The Mg(2+) site is built by S278 and S280. N285 carries N-linked (GlcNAc...) asparagine glycosylation. Residue T353 coordinates Mg(2+). A glycan (N-linked (GlcNAc...) asparagine) is linked at N378. One can recognise a Peptidase S1 domain in the interval 477 to 757 (LCGMVWEHRK…VLPWLKEKLQ (281 aa)). 5 disulfide bridges follow: C478/C596, C511/C527, C599/C615, C656/C682, and C695/C725. Catalysis depends on charge relay system residues H526 and D576. S699 functions as the Charge relay system in the catalytic mechanism.

Belongs to the peptidase S1 family. Monomer. Interacts with complement C3b; this interaction is dependent on the presence of Mg(2+). As to quaternary structure, catalytic component of the C3 convertase of the alternative complement pathway, also named C3bBb, composed of complement factor B Bb and complement C3b. Catalytic component of the C5 convertase of the alternative complement pathway, also named C3bBb3b, composed of complement factor B Bb and additional molecules of complement C3b. Interacts to CFP; this interaction contributes to the stabilization of the active C3-convertase enzyme complex. The cofactor is Mg(2+). It depends on Mn(2+) as a cofactor. In terms of processing, cleaved by CFD following activation of the alternative complement system, generating Ba and Bb chains. Cleavage and activation takes place when CFB is already associated with complement C3b.

Its subcellular location is the secreted. It localises to the cell surface. It catalyses the reaction Cleavage of Arg-|-Ser bond in complement component C3 alpha-chain to yield C3a and C3b, and Arg-|-Xaa bond in complement component C5 alpha-chain to yield C5a and C5b.. In terms of biological role, precursor of the catalytic component of the C3 and C5 convertase complexes of the alternative pathway of the complement system, a cascade of proteins that leads to phagocytosis and breakdown of pathogens and signaling that strengthens the adaptive immune system. The alternative complement pathway acts as an amplification loop that enhances other complement pathways (classical, lectin and GZMK) by promoting formation of additional C3 and C5 convertases. CFB is cleaved and activated by CFD to generate Ba and Bb chains; Bb chain constituting the catalytic component of the C3 and C5 convertases. Its function is as follows. Serine protease component of the complement C3 and C5 convertase complexes of the alternative complement pathway. Following cleavage and activation by factor D (CFD), forms the C3 convertase together with complement C3b. As part of the C3 convertase, cleaves and activates C3 into C3a anaphylatoxin and C3b opsonin, the next components of the complement pathways. When an additional complement C3b molecule binds to the C3 convertase, forms the C5 convertase, which cleaves and activates C5 into C5a anaphylatoxin and C5b component of the membrane attack complex. Involved in proliferation and differentiation of preactivated B-lymphocytes, rapid spreading of peripheral blood monocytes, stimulation of lymphocyte blastogenesis and lysis of erythrocytes. The protein is Complement factor B (CFB) of Pan troglodytes (Chimpanzee).